The chain runs to 294 residues: Protoheme IX farnesyltransferase (294 aa).

The next 9 helical transmembrane spans lie at 22–42 (VTQL…PELP), 46–66 (IVVA…AINC), 89–109 (ITVP…MWVL), 116–136 (LTMW…TIIL), 143–163 (NIVI…AAVA), 170–190 (AWIL…ALAL), 212–232 (FTQF…MLPF), 234–254 (VGMS…IFVW), and 272–292 (FAYS…DHYL).

This sequence belongs to the UbiA prenyltransferase family. Protoheme IX farnesyltransferase subfamily.

The protein resides in the cell inner membrane. The catalysed reaction is heme b + (2E,6E)-farnesyl diphosphate + H2O = Fe(II)-heme o + diphosphate. It participates in porphyrin-containing compound metabolism; heme O biosynthesis; heme O from protoheme: step 1/1. Converts heme B (protoheme IX) to heme O by substitution of the vinyl group on carbon 2 of heme B porphyrin ring with a hydroxyethyl farnesyl side group. The protein is Protoheme IX farnesyltransferase of Janthinobacterium sp. (strain Marseille) (Minibacterium massiliensis).